The sequence spans 166 residues: UPF0251 protein UNCMA_27150 (166 aa).

Belongs to the UPF0251 family.

The protein is UPF0251 protein UNCMA_27150 of Methanocella arvoryzae (strain DSM 22066 / NBRC 105507 / MRE50).